Consider the following 457-residue polypeptide: Multidrug resistance protein MdtK (457 aa).

Transmembrane regions (helical) follow at residues 11 to 31, 53 to 73, 93 to 113, 127 to 147, 160 to 180, 188 to 208, 243 to 263, 276 to 296, 316 to 336, 357 to 377, 387 to 407, and 416 to 436; these read LLAL…MGVV, IWLP…PIVA, WLAT…RFII, AIGF…YQVL, GMII…AFIY, LGGI…FLMM, LPVG…ALLV, IALN…IAAT, ITAL…SIIF, LMLF…GSGV, IFFI…YLLG, and MGPA…AIMM.

It belongs to the multi antimicrobial extrusion (MATE) (TC 2.A.66.1) family. MdtK subfamily.

Its subcellular location is the cell inner membrane. Multidrug efflux pump that functions probably as a Na(+)/drug antiporter. This Proteus mirabilis (strain HI4320) protein is Multidrug resistance protein MdtK.